The sequence spans 525 residues: GMP synthase [glutamine-hydrolyzing] (525 aa).

Positions 9 to 207 constitute a Glutamine amidotransferase type-1 domain; it reads RILILDFGSQ…VVDICKCEKL (199 aa). Cysteine 86 acts as the Nucleophile in catalysis. Active-site residues include histidine 181 and glutamate 183. Residues 208–400 enclose the GMPS ATP-PPase domain; it reads WTSASIIDDA…LGLPYDMLYR (193 aa). 235 to 241 provides a ligand contact to ATP; sequence SGGVDSS.

In terms of assembly, homodimer.

The enzyme catalyses XMP + L-glutamine + ATP + H2O = GMP + L-glutamate + AMP + diphosphate + 2 H(+). It functions in the pathway purine metabolism; GMP biosynthesis; GMP from XMP (L-Gln route): step 1/1. Functionally, catalyzes the synthesis of GMP from XMP. The sequence is that of GMP synthase [glutamine-hydrolyzing] from Colwellia psychrerythraea (strain 34H / ATCC BAA-681) (Vibrio psychroerythus).